Consider the following 186-residue polypeptide: C-type lectin 37Da (186 aa).

Residues 1-20 (MLKTLVQLFLVVAGFAPGFG) form the signal peptide. N-linked (GlcNAc...) asparagine glycans are attached at residues Asn-35 and Asn-47. A C-type lectin domain is found at 46 to 169 (INESYYVFGQ…CHNHASSLFK (124 aa)). Cys-140 and Cys-160 are oxidised to a cystine.

The protein resides in the secreted. In terms of biological role, galactose-specific lectin that displays calcium-dependent activity. Binds to the surface of hemocytes and enhances hemocyte encapsulation and melanization. This is likely by interacting with carbohydrates on the surface of the hemocytes. Also displays agglutination activity against the Gram-negative bacterium E.coli. In Drosophila melanogaster (Fruit fly), this protein is C-type lectin 37Da.